Here is a 241-residue protein sequence, read N- to C-terminus: Ribonuclease P protein component 3 (241 aa).

This sequence belongs to the eukaryotic/archaeal RNase P protein component 3 family. Consists of a catalytic RNA component and at least 4-5 protein subunits.

The protein localises to the cytoplasm. The catalysed reaction is Endonucleolytic cleavage of RNA, removing 5'-extranucleotides from tRNA precursor.. Its function is as follows. Part of ribonuclease P, a protein complex that generates mature tRNA molecules by cleaving their 5'-ends. This Methanococcoides burtonii (strain DSM 6242 / NBRC 107633 / OCM 468 / ACE-M) protein is Ribonuclease P protein component 3.